The following is a 308-amino-acid chain: Methionyl-tRNA formyltransferase (308 aa).

(6S)-5,6,7,8-tetrahydrofolate is bound at residue 110–113 (SLLP).

The protein belongs to the Fmt family.

The catalysed reaction is L-methionyl-tRNA(fMet) + (6R)-10-formyltetrahydrofolate = N-formyl-L-methionyl-tRNA(fMet) + (6S)-5,6,7,8-tetrahydrofolate + H(+). Functionally, attaches a formyl group to the free amino group of methionyl-tRNA(fMet). The formyl group appears to play a dual role in the initiator identity of N-formylmethionyl-tRNA by promoting its recognition by IF2 and preventing the misappropriation of this tRNA by the elongation apparatus. In Neisseria meningitidis serogroup A / serotype 4A (strain DSM 15465 / Z2491), this protein is Methionyl-tRNA formyltransferase.